We begin with the raw amino-acid sequence, 1144 residues long: MAIRYVFGRAGRGKSYFVLEEIKKRLEGEGHHKLFLLVPEQFTLQAERDLIGKQALKGIMRAEVLSFTRLTHYVFNEVGGITKIPINEIGKNMILRKIADESSKDLSIYKSIAKQEGFITKLNDLICEMKQHDITPIELTMEFNEMEEDTLLKRKLNDIILLYQKFNNYLRDRYVDNEDNVNLLIENIEKVQFLEGAEVWIDGFQSFTPQIFRVIEKLAEKVKNLTITFTMELKSKESDQDLFHINRKTYLKIKSIAQRLGLEEEIIDLDRNERPVLPKVQEICHIEKELYAYPYQQYTGEITHLDVFSGSNLYTEMENVAAQIIHLVRDKGYRWKDIALVSAGLEEYSMILKRVFEEYSIPYFMDEKRSIMNNPIVELILSSIGILARGYQYEDVFRFLKTGFGDLNKDEVEELENYVLQYGIKGKDYAVPFTKGFTNKKHEEIEQEESDEIHEEKIKYNEFRERFIAPFLKFEKKIYRKKKVGHITKALFEFMKDLNIEAKLDQWIEELREKKYFEYVNENTQIWNKVMEILDQLTEILAEESTTLKEYGRILEAGFLACEVGVIPTTIDQVLVGSIERSKSHDIKALFVIGVNDGILPSSREDGGILLDHERESLDKKGLSIGNTLENALLEEQFTIYSALSKPTEYLWISYALADQEGKAQRQSILIDRIKKLFRNLNIQSDVVPTLNRQLHLITTPISTFKYMTESIRQNIDDKPMEDIWWDVYQWYSNESQWDERRNLMVKGLFHENQISYIGEQKARSLYEHPIKSSVSRLERFANCPFSHFVTYGLRPKERKEYQLSNPDIGRLFHDSMENFTKELVNEQIQWKDLTREQSDYFVEKVIDEMVPEFEHGIMLSTHRYQYLVTRLKRISKRAMWTLTEHIKKGQFVPMGHEIIFGLEGDIPPIVIELESGEKIYLEGRIDRVDILNDEDGNYVKIIDYKSGSKEFSLSDVYYGFQIQLLVYLDAVLSSQSQKYQAEVHPGGIFYFKIDDPMVKTTEKAVKEVEKEINKRLKMKGLVLKDVNIIKKIDEDIGRSSSILPASLTKEGEISKTSSALPEEDFKALLKHVRGLVKEIGEEMLKGNVKIEPFKKGGDTSCKYCAYISICQFDHSFHENQYKTIKELKNEEVLEKIRKENENI.

The UvrD-like helicase ATP-binding domain occupies 1–276 (MAIRYVFGRA…IDLDRNERPV (276 aa)). Position 8-15 (8-15 (GRAGRGKS)) interacts with ATP. The UvrD-like helicase C-terminal domain occupies 274–584 (RPVLPKVQEI…LVGSIERSKS (311 aa)). [4Fe-4S] cluster-binding residues include Cys-784, Cys-1102, Cys-1105, and Cys-1111.

The protein belongs to the helicase family. AddB/RexB type 1 subfamily. In terms of assembly, heterodimer of AddA and AddB. It depends on Mg(2+) as a cofactor. The cofactor is [4Fe-4S] cluster.

Its function is as follows. The heterodimer acts as both an ATP-dependent DNA helicase and an ATP-dependent, dual-direction single-stranded exonuclease. Recognizes the chi site generating a DNA molecule suitable for the initiation of homologous recombination. The AddB subunit has 5' -&gt; 3' nuclease activity but not helicase activity. The chain is ATP-dependent helicase/deoxyribonuclease subunit B from Alkaliphilus oremlandii (strain OhILAs) (Clostridium oremlandii (strain OhILAs)).